The primary structure comprises 367 residues: UDP-N-acetylglucosamine--N-acetylmuramyl-(pentapeptide) pyrophosphoryl-undecaprenol N-acetylglucosamine transferase (367 aa).

UDP-N-acetyl-alpha-D-glucosamine-binding positions include 11-13 (TAG), N125, R163, S197, and Q289.

Belongs to the glycosyltransferase 28 family. MurG subfamily.

It is found in the cell membrane. It catalyses the reaction di-trans,octa-cis-undecaprenyl diphospho-N-acetyl-alpha-D-muramoyl-L-alanyl-D-glutamyl-meso-2,6-diaminopimeloyl-D-alanyl-D-alanine + UDP-N-acetyl-alpha-D-glucosamine = di-trans,octa-cis-undecaprenyl diphospho-[N-acetyl-alpha-D-glucosaminyl-(1-&gt;4)]-N-acetyl-alpha-D-muramoyl-L-alanyl-D-glutamyl-meso-2,6-diaminopimeloyl-D-alanyl-D-alanine + UDP + H(+). It functions in the pathway cell wall biogenesis; peptidoglycan biosynthesis. Its function is as follows. Cell wall formation. Catalyzes the transfer of a GlcNAc subunit on undecaprenyl-pyrophosphoryl-MurNAc-pentapeptide (lipid intermediate I) to form undecaprenyl-pyrophosphoryl-MurNAc-(pentapeptide)GlcNAc (lipid intermediate II). The sequence is that of UDP-N-acetylglucosamine--N-acetylmuramyl-(pentapeptide) pyrophosphoryl-undecaprenol N-acetylglucosamine transferase from Clavibacter michiganensis subsp. michiganensis (strain NCPPB 382).